The chain runs to 351 residues: Molybdenum import ATP-binding protein ModC (351 aa).

In terms of domain architecture, ABC transporter spans 1 to 229 (MLEINIHQQL…DILADWQSET (229 aa)). 31-38 (GRSGAGKS) is an ATP binding site. Residues 290-351 (HSSIRNILNG…IYVQIKSVSL (62 aa)) form the Mop domain.

This sequence belongs to the ABC transporter superfamily. Molybdate importer (TC 3.A.1.8) family. The complex is composed of two ATP-binding proteins (ModC), two transmembrane proteins (ModB) and a solute-binding protein (ModA).

It localises to the cell inner membrane. It carries out the reaction molybdate(out) + ATP + H2O = molybdate(in) + ADP + phosphate + H(+). Functionally, part of the ABC transporter complex ModABC involved in molybdenum import. Responsible for energy coupling to the transport system. The chain is Molybdenum import ATP-binding protein ModC from Haemophilus ducreyi (strain 35000HP / ATCC 700724).